The following is a 257-amino-acid chain: Phycoerythrobilin:ferredoxin oxidoreductase (257 aa).

Belongs to the HY2 family.

It carries out the reaction (3Z)-phycoerythrobilin + oxidized 2[4Fe-4S]-[ferredoxin] = 15,16-dihydrobiliverdin + reduced 2[4Fe-4S]-[ferredoxin] + 2 H(+). Catalyzes the two-electron reduction of the C2 and C3(1) diene system of 15,16-dihydrobiliverdin. The sequence is that of Phycoerythrobilin:ferredoxin oxidoreductase (pebB) from Synechococcus sp. (strain WH8020).